Reading from the N-terminus, the 104-residue chain is A-type ATP synthase subunit F (104 aa).

It belongs to the V-ATPase F subunit family. In terms of assembly, has multiple subunits with at least A(3), B(3), C, D, E, F, H, I and proteolipid K(x).

It is found in the cell membrane. In terms of biological role, component of the A-type ATP synthase that produces ATP from ADP in the presence of a proton gradient across the membrane. This is A-type ATP synthase subunit F from Thermoplasma volcanium (strain ATCC 51530 / DSM 4299 / JCM 9571 / NBRC 15438 / GSS1).